A 483-amino-acid chain; its full sequence is Aspartyl/glutamyl-tRNA(Asn/Gln) amidotransferase subunit B (483 aa).

The protein belongs to the GatB/GatE family. GatB subfamily. Heterotrimer of A, B and C subunits.

The enzyme catalyses L-glutamyl-tRNA(Gln) + L-glutamine + ATP + H2O = L-glutaminyl-tRNA(Gln) + L-glutamate + ADP + phosphate + H(+). It carries out the reaction L-aspartyl-tRNA(Asn) + L-glutamine + ATP + H2O = L-asparaginyl-tRNA(Asn) + L-glutamate + ADP + phosphate + 2 H(+). Allows the formation of correctly charged Asn-tRNA(Asn) or Gln-tRNA(Gln) through the transamidation of misacylated Asp-tRNA(Asn) or Glu-tRNA(Gln) in organisms which lack either or both of asparaginyl-tRNA or glutaminyl-tRNA synthetases. The reaction takes place in the presence of glutamine and ATP through an activated phospho-Asp-tRNA(Asn) or phospho-Glu-tRNA(Gln). This Rickettsia rickettsii (strain Iowa) protein is Aspartyl/glutamyl-tRNA(Asn/Gln) amidotransferase subunit B.